The following is a 328-amino-acid chain: Arabinose 5-phosphate isomerase KdsD (328 aa).

The 144-residue stretch at 41 to 184 folds into the SIS domain; sequence ACEKMFNCTG…AVALLKARGF (144 aa). Residues 75–76, histidine 82, histidine 88, 114–123, and 148–150 contribute to the substrate site; these read GT, ALIPVLKRLH, and KVP. Histidine 82 contributes to the Zn(2+) binding site. Residues 210–268 enclose the CBS 1 domain; it reads MHTGDEIPHVNKHATLRDALLEITRKNLGMTVICDESMKIDGIFTDGDLRRVFDMGGDM. Glutamate 275 serves as a coordination point for substrate. The region spanning 277 to 328 is the CBS 2 domain; the sequence is MTPGGIRVRPGILAVDALNLMQSRHITSVLVADGDQLLGVLHMHDLLRAGVV.

The protein belongs to the SIS family. GutQ/KpsF subfamily. Homotetramer.

The enzyme catalyses D-arabinose 5-phosphate = D-ribulose 5-phosphate. It functions in the pathway carbohydrate biosynthesis; 3-deoxy-D-manno-octulosonate biosynthesis; 3-deoxy-D-manno-octulosonate from D-ribulose 5-phosphate: step 1/3. Its pathway is bacterial outer membrane biogenesis; lipopolysaccharide biosynthesis. Involved in the biosynthesis of 3-deoxy-D-manno-octulosonate (KDO), a unique 8-carbon sugar component of lipopolysaccharides (LPSs). Catalyzes the reversible aldol-ketol isomerization between D-ribulose 5-phosphate (Ru5P) and D-arabinose 5-phosphate (A5P). The chain is Arabinose 5-phosphate isomerase KdsD (kdsD) from Salmonella typhimurium (strain LT2 / SGSC1412 / ATCC 700720).